Consider the following 427-residue polypeptide: Ceramide Synthase FUM18 (427 aa).

N-linked (GlcNAc...) asparagine glycosylation is present at asparagine 20. 6 helical membrane passes run 38–58 (ILPL…IHIS), 131–151 (EQGW…LIWA), 173–193 (GLIK…VISV), 202–222 (YWLN…CYVY), 250–270 (YLGF…TWIV), and 335–355 (VSIL…FGFI). In terms of domain architecture, TLC spans 124 to 364 (RKVVRFSEQG…ICKVAIGVLD (241 aa)). A disordered region spans residues 373–406 (SDVESDEEDSEPVANGSGWQQSQLQPGRRVGSNG). An N-linked (GlcNAc...) asparagine glycan is attached at asparagine 387.

Belongs to the sphingosine N-acyltransferase family.

Its subcellular location is the endoplasmic reticulum membrane. It functions in the pathway mycotoxin biosynthesis. In terms of biological role, ceramide synthase; part of the gene cluster that mediates the biosynthesis of fumonisins B1 (FB1), B2 (FB2), B3 (FB3), and B4 (FB4), which are carcinogenic mycotoxins. Plays a role in self-protection from FB1 toxicity by contributing to ceramide synthesis. The biosynthesis starts with the FUM1-catalyzed carbon chain assembly from one molecule of acetyl-CoA, eight molecules of malonyl-CoA, and two molecules of methionine (in S-adenosyl form). The C18 polyketide chain is released from the enzyme by a nucleophilic attack of a carbanion, which is derived from R-carbon of alanine by decarboxylation, on the carbonyl carbon of polyketide acyl chain. This step is catalyzed by the pyridoxal 5'-phosphate-dependent aminoacyl transferase FUM8. The resultant 3-keto intermediate is then stereospecifically reduced to a 3-hydroxyl product by reductase FUM13. Subsequent oxidations at C-10 by the cytochrome P450 monooxygenase FUM2, C-14 and C-15 by FUM6, FUM12 or FUM15, tricarballylic esterification of the hydroxyl groups on C-14 and C-15 by acyltransferase FUM14, and C-5 hydroxylation by 2-keto-glutarate-dependent dioxygenase FUM3 furnish the biosynthesis of fumonisins. The tricarballylic moieties are most likely derived from the citric acid cycle, and their addition to the carbon backbone may involve FUM7, FUM10, FUM11 and FUM14. The sequence is that of Ceramide Synthase FUM18 from Gibberella moniliformis (strain M3125 / FGSC 7600) (Maize ear and stalk rot fungus).